The primary structure comprises 117 residues: Probable non-functional immunoglobulinn kappa variable 1-37 (117 aa).

The N-terminal stretch at 1 to 22 is a signal peptide; sequence MDMRVPAQLLGLLLLWVPGARC. An Ig-like domain is found at 24-117; that stretch reads IQLTQSPSSL…YYGQRTYNAP (94 aa).

As to quaternary structure, most probably, the immunoglobulin is not assembled due to incorrect folding of light chain. Immunoglobulins are composed of two identical heavy chains and two identical light chains; disulfide-linked.

The protein resides in the secreted. Its subcellular location is the cell membrane. In terms of biological role, probable non-functional open reading frame (ORF) of V region of the variable domain of immunoglobulin light chains. Non-functional ORF generally cannot participate in the synthesis of a productive immunoglobulin chain due to altered V-(D)-J or switch recombination and/or splicing site (at mRNA level) and/or conserved amino acid change (protein level). Immunoglobulins, also known as antibodies, are membrane-bound or secreted glycoproteins produced by B lymphocytes. In the recognition phase of humoral immunity, the membrane-bound immunoglobulins serve as receptors which, upon binding of a specific antigen, trigger the clonal expansion and differentiation of B lymphocytes into immunoglobulins-secreting plasma cells. Secreted immunoglobulins mediate the effector phase of humoral immunity, which results in the elimination of bound antigens. The antigen binding site is formed by the variable domain of one heavy chain, together with that of its associated light chain. Thus, each immunoglobulin has two antigen binding sites with remarkable affinity for a particular antigen. The variable domains are assembled by a process called V-(D)-J rearrangement and can then be subjected to somatic hypermutations which, after exposure to antigen and selection, allow affinity maturation for a particular antigen. This is Probable non-functional immunoglobulinn kappa variable 1-37 from Homo sapiens (Human).